Consider the following 479-residue polypeptide: Dynein regulatory complex subunit 4 (479 aa).

Coiled coils occupy residues 28 to 93, 117 to 170, and 210 to 347; these read RDQL…LADI, RAEA…FNEK, and EVEE…GLKE.

Belongs to the DRC4 family.

The protein localises to the cytoplasm. It localises to the cytoskeleton. It is found in the flagellum basal body. Its function is as follows. Cytoskeletal linker which probably functions in axonemal and non-axonemal dynein regulation. May play a role in the spermatozoa motility. The sequence is that of Dynein regulatory complex subunit 4 from Drosophila melanogaster (Fruit fly).